A 133-amino-acid polypeptide reads, in one-letter code: Single-stranded DNA-binding protein 2 (133 aa).

In terms of domain architecture, SSB spans 1 to 103 (MNKTILIGRL…VVAEEVKFLE (103 aa)).

Homotetramer.

This is Single-stranded DNA-binding protein 2 (ssb2) from Clostridium acetobutylicum (strain ATCC 824 / DSM 792 / JCM 1419 / IAM 19013 / LMG 5710 / NBRC 13948 / NRRL B-527 / VKM B-1787 / 2291 / W).